The chain runs to 432 residues: Leucine-rich repeat-containing protein ODA7 (432 aa).

LRR repeat units follow at residues 47–68 (NLKA…PPLA), 69–90 (DLKC…EAVP), 91–112 (GLDT…ACCP), 113–134 (ALRT…AHLA), and 138–159 (ALQT…DILK). An LRRCT domain is found at 173-211 (PVVSNIKNYRKVLVTSIPSLTYLDDRPVFDNERKIAQAW). Positions 212–243 (LEGGLEGERAMRNQLKEEEEERSRKNHEFMMQ) form a coiled coil. Disordered stretches follow at residues 297–332 (RPGE…AAAE) and 368–432 (EELD…NDLD). Low complexity-rich tracts occupy residues 323 to 332 (GAWGSGAAAE) and 407 to 425 (VAAA…ISAA).

Belongs to the DNAAF1 family. In terms of assembly, interacts with both outer row and I1 inner row dyneins.

The protein localises to the cytoplasm. Its subcellular location is the cytoskeleton. The protein resides in the cilium axoneme. In terms of biological role, cilium-specific protein required for cilia structures. Axonemal dynein-associated protein that participates in a structural link between inner and outer row dyneins. The protein is Leucine-rich repeat-containing protein ODA7 (ODA7) of Chlamydomonas reinhardtii (Chlamydomonas smithii).